The chain runs to 81 residues: Photosystem I iron-sulfur center (81 aa).

2 consecutive 4Fe-4S ferredoxin-type domains span residues 2–31 (SHSVKIYDTCIGCTQCVRACPLDVLEMVPW) and 39–68 (IAASPRTEDCVGCKRCETACPTDFLSIRVY). [4Fe-4S] cluster is bound by residues Cys11, Cys14, Cys17, Cys21, Cys48, Cys51, Cys54, and Cys58.

As to quaternary structure, the cyanobacterial PSI reaction center is composed of one copy each of PsaA,B,C,D,E,F,I,J,K,L,M and X, and forms trimeric complexes. It depends on [4Fe-4S] cluster as a cofactor.

The protein localises to the cellular thylakoid membrane. It carries out the reaction reduced [plastocyanin] + hnu + oxidized [2Fe-2S]-[ferredoxin] = oxidized [plastocyanin] + reduced [2Fe-2S]-[ferredoxin]. Apoprotein for the two 4Fe-4S centers FA and FB of photosystem I (PSI); essential for photochemical activity. FB is the terminal electron acceptor of PSI, donating electrons to ferredoxin. The C-terminus interacts with PsaA/B/D and helps assemble the protein into the PSI complex. Required for binding of PsaD and PsaE to PSI. PSI is a plastocyanin/cytochrome c6-ferredoxin oxidoreductase, converting photonic excitation into a charge separation, which transfers an electron from the donor P700 chlorophyll pair to the spectroscopically characterized acceptors A0, A1, FX, FA and FB in turn. In Synechococcus elongatus (strain ATCC 33912 / PCC 7942 / FACHB-805) (Anacystis nidulans R2), this protein is Photosystem I iron-sulfur center.